Reading from the N-terminus, the 126-residue chain is Fluoride-specific ion channel FluC (126 aa).

The next 4 membrane-spanning stretches (helical) occupy residues 3-23 (FAIL…RFLV), 37-57 (IGTL…IACV), 70-90 (VIGL…MDNV), and 104-124 (NVLL…HWLM). Residues Gly-77 and Thr-80 each contribute to the Na(+) site.

The protein belongs to the fluoride channel Fluc/FEX (TC 1.A.43) family.

The protein localises to the cell inner membrane. It catalyses the reaction fluoride(in) = fluoride(out). Its activity is regulated as follows. Na(+) is not transported, but it plays an essential structural role and its presence is essential for fluoride channel function. Functionally, fluoride-specific ion channel. Important for reducing fluoride concentration in the cell, thus reducing its toxicity. This is Fluoride-specific ion channel FluC from Vibrio cholerae serotype O1 (strain ATCC 39541 / Classical Ogawa 395 / O395).